Reading from the N-terminus, the 322-residue chain is GTP 3',8-cyclase (322 aa).

A Radical SAM core domain is found at lysine 5–aspartate 233. Arginine 14 is a binding site for GTP. The [4Fe-4S] cluster site is built by cysteine 21 and cysteine 25. Tyrosine 27 provides a ligand contact to S-adenosyl-L-methionine. [4Fe-4S] cluster is bound at residue cysteine 28. Arginine 64 serves as a coordination point for GTP. Glycine 68 provides a ligand contact to S-adenosyl-L-methionine. Threonine 95 serves as a coordination point for GTP. Serine 119 is a binding site for S-adenosyl-L-methionine. Lysine 155 serves as a coordination point for GTP. Position 189 (methionine 189) interacts with S-adenosyl-L-methionine. Residues cysteine 249 and cysteine 252 each contribute to the [4Fe-4S] cluster site. Arginine 254–arginine 256 contributes to the GTP binding site. Cysteine 266 serves as a coordination point for [4Fe-4S] cluster.

It belongs to the radical SAM superfamily. MoaA family. Monomer and homodimer. Requires [4Fe-4S] cluster as cofactor.

The catalysed reaction is GTP + AH2 + S-adenosyl-L-methionine = (8S)-3',8-cyclo-7,8-dihydroguanosine 5'-triphosphate + 5'-deoxyadenosine + L-methionine + A + H(+). The protein operates within cofactor biosynthesis; molybdopterin biosynthesis. Functionally, catalyzes the cyclization of GTP to (8S)-3',8-cyclo-7,8-dihydroguanosine 5'-triphosphate. The sequence is that of GTP 3',8-cyclase from Campylobacter curvus (strain 525.92).